The sequence spans 77 residues: MTQKATILAIFMVVLVLGLETKETQGQEMCHDLIKKTDCDDATCVTLCKQKWNGNGGGSCFQIVNLKSCLCAFPCQV.

The first 26 residues, 1–26 (MTQKATILAIFMVVLVLGLETKETQG), serve as a signal peptide directing secretion. Disulfide bonds link C30-C75, C39-C60, C44-C69, and C48-C71.

It belongs to the DEFL family.

The protein resides in the secreted. In Arabidopsis thaliana (Mouse-ear cress), this protein is Putative defensin-like protein 120 (LCR56).